We begin with the raw amino-acid sequence, 805 residues long: Leucine--tRNA ligase (805 aa).

The short motif at 40–51 is the 'HIGH' region element; that stretch reads PYPSGAGLHVGH. Residues 576–580 carry the 'KMSKS' region motif; the sequence is KMSKS. Lysine 579 is an ATP binding site.

Belongs to the class-I aminoacyl-tRNA synthetase family.

It localises to the cytoplasm. The catalysed reaction is tRNA(Leu) + L-leucine + ATP = L-leucyl-tRNA(Leu) + AMP + diphosphate. This is Leucine--tRNA ligase from Brevibacillus brevis (strain 47 / JCM 6285 / NBRC 100599).